Here is a 228-residue protein sequence, read N- to C-terminus: Leucyl/phenylalanyl-tRNA--protein transferase (228 aa).

It belongs to the L/F-transferase family.

The protein localises to the cytoplasm. The enzyme catalyses N-terminal L-lysyl-[protein] + L-leucyl-tRNA(Leu) = N-terminal L-leucyl-L-lysyl-[protein] + tRNA(Leu) + H(+). It carries out the reaction N-terminal L-arginyl-[protein] + L-leucyl-tRNA(Leu) = N-terminal L-leucyl-L-arginyl-[protein] + tRNA(Leu) + H(+). The catalysed reaction is L-phenylalanyl-tRNA(Phe) + an N-terminal L-alpha-aminoacyl-[protein] = an N-terminal L-phenylalanyl-L-alpha-aminoacyl-[protein] + tRNA(Phe). Its function is as follows. Functions in the N-end rule pathway of protein degradation where it conjugates Leu, Phe and, less efficiently, Met from aminoacyl-tRNAs to the N-termini of proteins containing an N-terminal arginine or lysine. The polypeptide is Leucyl/phenylalanyl-tRNA--protein transferase (Sulfurimonas denitrificans (strain ATCC 33889 / DSM 1251) (Thiomicrospira denitrificans (strain ATCC 33889 / DSM 1251))).